A 133-amino-acid polypeptide reads, in one-letter code: Cell division protein FtsL (133 aa).

The Cytoplasmic portion of the chain corresponds to 1-45 (MAVEKVYQPYDEQVYNSIPKQQPQTKPEKKTVSRKVVVQLTKFEK). Residues 46-65 (VLYITLITVIAMLSIYMLSL) traverse the membrane as a helical segment. Topologically, residues 66–133 (KMDAYDTRGK…VVRSNGEAKN (68 aa)) are extracellular.

It belongs to the FtsL family.

It localises to the cell membrane. Essential cell division protein. This Staphylococcus aureus (strain NCTC 8325 / PS 47) protein is Cell division protein FtsL.